The following is a 106-amino-acid chain: Large ribosomal subunit protein P1B (106 aa).

Ser-2 bears the N-acetylserine mark. Positions 69–82 (AGAASGAAAAGGDA) are enriched in low complexity. Residues 69–106 (AGAASGAAAAGGDAAAEEEKEEEAAEESDDDMGFGLFD) are disordered. A compositionally biased stretch (acidic residues) spans 83-100 (AAEEEKEEEAAEESDDDM). Phosphoserine is present on Ser-96.

The protein belongs to the eukaryotic ribosomal protein P1/P2 family. In terms of assembly, component of the large ribosomal subunit (LSU). Mature yeast ribosomes consist of a small (40S) and a large (60S) subunit. The 40S small subunit contains 1 molecule of ribosomal RNA (18S rRNA) and 33 different proteins (encoded by 57 genes). The large 60S subunit contains 3 rRNA molecules (25S, 5.8S and 5S rRNA) and 46 different proteins (encoded by 81 genes). The 5 acidic ribosomal P-proteins form the stalk structure of the 60S subunit. They are organized as a pentameric complex in which uL10/P0 interacts with 2 heterodimers, P1A-P2B and P1B-P2A.

It is found in the cytoplasm. Component of the ribosome, a large ribonucleoprotein complex responsible for the synthesis of proteins in the cell. The small ribosomal subunit (SSU) binds messenger RNAs (mRNAs) and translates the encoded message by selecting cognate aminoacyl-transfer RNA (tRNA) molecules. The large subunit (LSU) contains the ribosomal catalytic site termed the peptidyl transferase center (PTC), which catalyzes the formation of peptide bonds, thereby polymerizing the amino acids delivered by tRNAs into a polypeptide chain. The nascent polypeptides leave the ribosome through a tunnel in the LSU and interact with protein factors that function in enzymatic processing, targeting, and the membrane insertion of nascent chains at the exit of the ribosomal tunnel. The polypeptide is Large ribosomal subunit protein P1B (Saccharomyces cerevisiae (strain ATCC 204508 / S288c) (Baker's yeast)).